We begin with the raw amino-acid sequence, 205 residues long: Outer-membrane lipoprotein LolB (205 aa).

The first 17 residues, 1–17, serve as a signal peptide directing secretion; the sequence is MFLRHCITFTMIALLAG. Residue Cys-18 is the site of N-palmitoyl cysteine attachment. Cys-18 carries S-diacylglycerol cysteine lipidation.

The protein belongs to the LolB family. As to quaternary structure, monomer.

The protein resides in the cell outer membrane. Plays a critical role in the incorporation of lipoproteins in the outer membrane after they are released by the LolA protein. The polypeptide is Outer-membrane lipoprotein LolB (Pseudomonas putida (strain ATCC 700007 / DSM 6899 / JCM 31910 / BCRC 17059 / LMG 24140 / F1)).